Consider the following 285-residue polypeptide: Urease accessory protein UreD (285 aa).

This sequence belongs to the UreD family. UreD, UreF and UreG form a complex that acts as a GTP-hydrolysis-dependent molecular chaperone, activating the urease apoprotein by helping to assemble the nickel containing metallocenter of UreC. The UreE protein probably delivers the nickel.

The protein resides in the cytoplasm. In terms of biological role, required for maturation of urease via the functional incorporation of the urease nickel metallocenter. This is Urease accessory protein UreD from Citrobacter koseri (strain ATCC BAA-895 / CDC 4225-83 / SGSC4696).